Consider the following 427-residue polypeptide: mRNA cap guanine-N(7) methyltransferase (427 aa).

The disordered stretch occupies residues 1–79 (MSLNYEQNAA…EPETEAASGA (79 aa)). 5 positions are modified to phosphoserine: Ser-22, Ser-24, Ser-29, Ser-46, and Ser-48. Basic and acidic residues predominate over residues 44-57 (HVSKSPREYYDEPG). In terms of domain architecture, mRNA cap 0 methyltransferase spans 103 to 411 (SKIFFMRNFN…LYLVCAFKKC (309 aa)). Residue 112–113 (NN) participates in mRNA binding. Residues Lys-116, Cys-143, Asp-165, Asp-202, Gln-225, and Tyr-230 each contribute to the S-adenosyl-L-methionine site.

The protein belongs to the class I-like SAM-binding methyltransferase superfamily. mRNA cap 0 methyltransferase family.

The protein localises to the nucleus. It catalyses the reaction a 5'-end (5'-triphosphoguanosine)-ribonucleoside in mRNA + S-adenosyl-L-methionine = a 5'-end (N(7)-methyl 5'-triphosphoguanosine)-ribonucleoside in mRNA + S-adenosyl-L-homocysteine. Functionally, mRNA-capping methyltransferase that methylates the N7 position of the added guanosine to the 5'-cap structure of mRNAs. Binds RNA containing 5'-terminal GpppC. The sequence is that of mRNA cap guanine-N(7) methyltransferase from Drosophila melanogaster (Fruit fly).